Consider the following 480-residue polypeptide: Probable histone deacetylase 1-A (480 aa).

The interval 10-321 (KVCYYYDGDV…WTYETAVALD (312 aa)) is histone deacetylase. Histidine 141 is an active-site residue. The tract at residues 388–480 (SIHDDSGEED…KRVKEETKSV (93 aa)) is disordered. Residues 401-416 (PDKRISIRSSDKRIAC) show a composition bias toward basic and acidic residues. Residues 417 to 427 (DEEFSDSEDEG) show a composition bias toward acidic residues. Residues 443–480 (VKTEEEKEGEDKKDVKEEEKAKDEKTDSKRVKEETKSV) are compositionally biased toward basic and acidic residues.

Belongs to the histone deacetylase family. HD type 1 subfamily. As to quaternary structure, part of a large multiprotein complex that also contains RBBP4. As to expression, oocyte.

The protein resides in the nucleus. Its subcellular location is the cytoplasm. The catalysed reaction is N(6)-acetyl-L-lysyl-[histone] + H2O = L-lysyl-[histone] + acetate. The enzyme catalyses N(6)-acetyl-L-lysyl-[protein] + H2O = L-lysyl-[protein] + acetate. It catalyses the reaction N(6)-(2E)-butenoyl-L-lysyl-[protein] + H2O = (2E)-2-butenoate + L-lysyl-[protein]. Histone deacetylase that catalyzes the deacetylation of lysine residues on the N-terminal part of the core histones (H2A, H2B, H3 and H4). Histone deacetylation gives a tag for epigenetic repression and plays an important role in transcriptional regulation, cell cycle progression and developmental events. Histone deacetylases act via the formation of large multiprotein complexes. Also functions as deacetylase for non-histone proteins. In addition to protein deacetylase activity, also has protein-lysine deacylase activity: acts as a protein decrotonylase by mediating decrotonylation ((2E)-butenoyl) of histones. This Xenopus laevis (African clawed frog) protein is Probable histone deacetylase 1-A (hdac1-a).